The sequence spans 764 residues: MDSEYYSGDQSDDGGATPVQDERDSGSDGEDDVNEQHSGSDTGSVDRHSENETSDREDGLTKIHNGTDSENDEPSNVHASDSESEELHRPKDSDSESEEHAESPASDSENEAVHQQGSDSEKEELLNGHASDSEKEEGRKHAASDSETEDTLQPQGSESDSEDPPRPQASDSESEEPPKPRISDSESEELPKPRISDSESEDPPRPQVSDSESEELPKPRVSDSESEDPPRPQASDSESEELPKPRVSDSESEDPQKGPASDSEAEDASRHKEKPESEDSDGENKREDSEVQNESDGHADRKGLHSSDSEEEEPKRQKIDSDDDGEKEGDEKVAKRKAAVLSDSEDEDKASAAKKSRVISDADDSDSDVVSDKSGKREKTVASDSEEEVGKEESSVKKSEEKDLFGSDSESGNEEENLIADIFGESGDEEEEEFTGFNQEDLEEEKNETQLKEAEDSDSDDNIKRGKHMDFLSDFEMMLQRKKSMCGKRRRNRDGGTFISDADDVVSAMIVKMNEAAEEDRQLNNQKKPALKKLTLLPTVVMHLKKQDLKETFIDSGVMSAIKEWLSPLPDRSLPALKIREELLKILQELPSVSQETLKHSGIGRAVMYLYKHPKESRSNKDMAGKLINEWSRPIFGLTSNYKGMTREEREQRDLEQMPQRRRMSSTGGQTPRRDLEKVLTGEEKALRPGDPGFCARARVPMPSNKDYVVRPKWNVEMESSRPGILKKGLSRLEKHKRRFAEQKRLSQMHRAVKFSIEGNRMPL.

N-acetylmethionine is present on Met1. The disordered stretch occupies residues 1–465 (MDSEYYSGDQ…DSDSDDNIKR (465 aa)). 3 positions are modified to phosphoserine: Ser27, Ser54, and Ser69. The segment covering 44 to 67 (SVDRHSENETSDREDGLTKIHNGT) has biased composition (basic and acidic residues). 2 stretches are compositionally biased toward basic and acidic residues: residues 85–102 (EELH…EHAE) and 119–144 (DSEK…HAAS). Phosphoserine occurs at positions 157, 170, 172, 183, 196, 198, 209, 211, 222, 224, 235, 237, 248, 250, 252, 261, 263, 277, 280, 295, 306, 307, 309, 321, 342, 344, 360, 365, 367, and 371. The span at 176-197 (EPPKPRISDSESEELPKPRISD) shows a compositional bias: basic and acidic residues. Basic and acidic residues predominate over residues 267–320 (DASRHKEKPESEDSDGENKREDSEVQNESDGHADRKGLHSSDSEEEEPKRQKID). The segment covering 370–381 (VSDKSGKREKTV) has biased composition (basic and acidic residues). Thr380 bears the Phosphothreonine mark. Phosphoserine occurs at positions 383 and 385. Residues 391–405 (KEESSVKKSEEKDLF) are compositionally biased toward basic and acidic residues. 4 positions are modified to phosphoserine: Ser407, Ser409, Ser411, and Ser426. An Integrase domain-binding motif (IBM) motif is present at residues 415-441 (EENLIADIFGESGDEEEEEFTGFNQED). A compositionally biased stretch (acidic residues) spans 426–446 (SGDEEEEEFTGFNQEDLEEEK). Residue Thr435 is modified to Phosphothreonine. 2 positions are modified to phosphoserine: Ser457 and Ser459. An interaction with SUPT6H and ALYREF region spans residues 469–764 (MDFLSDFEMM…FSIEGNRMPL (296 aa)). The TFIIS N-terminal domain maps to 560-638 (SAIKEWLSPL…NEWSRPIFGL (79 aa)). Positions 642–676 (YKGMTREEREQRDLEQMPQRRRMSSTGGQTPRRDL) are disordered. Residues 645-656 (MTREEREQRDLE) show a composition bias toward basic and acidic residues. Phosphothreonine is present on Thr671.

This sequence belongs to the IWS1 family. As to quaternary structure, interacts with SUPT6H; binds preferentially to the POLR2A-bound SUPT6H. Interacts with ALYREF/THOC4, SETD2 and PRMT5. Interacts with HDGFRP2. Interacts (via IBM motif) with PSIP1 (via IBD domain); phosphorylation increases its affinity for PSIP1. Post-translationally, phosphorylation increases its interaction with PSIP1.

The protein resides in the nucleus. Its function is as follows. Transcription factor which plays a key role in defining the composition of the RNA polymerase II (RNAPII) elongation complex and in modulating the production of mature mRNA transcripts. Acts as an assembly factor to recruit various factors to the RNAPII elongation complex and is recruited to the complex via binding to the transcription elongation factor SUPT6H bound to the C-terminal domain (CTD) of the RNAPII subunit RPB1 (POLR2A). The SUPT6H:IWS1:CTD complex recruits mRNA export factors (ALYREF/THOC4, EXOSC10) as well as histone modifying enzymes (such as SETD2) to ensure proper mRNA splicing, efficient mRNA export and elongation-coupled H3K36 methylation, a signature chromatin mark of active transcription. The protein is Protein IWS1 homolog (Iws1) of Rattus norvegicus (Rat).